The chain runs to 305 residues: Protein ORANGE, chloroplastic (305 aa).

A chloroplast-targeting transit peptide spans 1–54; sequence MSCLGRILSVSYPPDPYGSRLSVSKLSSPGRNRRLRWRFTALDSDSSSLDSDSS. Helical transmembrane passes span 144–164 and 197–217; these read VYYA…GLLA and IVAS…VVEV. The segment at 206–297 is CR-type-like; the sequence is VGVISALMVV…CTGMAMASEH (92 aa). A CXXCXGXG motif repeat occupies 228 to 235; sequence CKYCLGTG. The stretch at 239 to 246 is one CXXCXXXG motif repeat; the sequence is CARCSSTG. Residues 272 to 279 form a CXXCXGXG motif repeat; that stretch reads CSNCSGAG. Residues 283-290 form a CXXCXXXG motif repeat; that stretch reads CPTCLCTG.

This sequence belongs to the orange-like family. As to quaternary structure, interacts with ERF1-2. Expressed in young leaves, curds and flower buds.

The protein resides in the plastid. Its subcellular location is the chloroplast membrane. It localises to the nucleus. Involved in chromoplast differentiation. Is associated with a cellular process that triggers the differentiation of pro-plastids or other non-colored plastids into chromoplasts for carotenoid accumulation. Associated with carotenoid accumulation in de-etiolated cotyledons. Controls leaf petiole elongation by suppressing the expression of ERF1 genes. The protein is Protein ORANGE, chloroplastic of Brassica oleracea var. botrytis (Cauliflower).